A 1120-amino-acid chain; its full sequence is Prophage side tail fiber protein homolog StfR (1120 aa).

Disordered stretches follow at residues 129 to 154 (KSASDASTSAREAATHAADAADSARA), 221 to 442 (SAST…ATRA), and 960 to 1021 (SGRA…AGAH). Low complexity-rich tracts occupy residues 221–239 (SASTATTKASEAATSARDA), 248–395 (SSET…SASA), and 402–442 (RQAS…ATRA). Over residues 985–1021 (DLGTKTTSSFDYGTKSTNNTGAHTHSVSGSTNSAGAH) the composition is skewed to polar residues.

This sequence belongs to the tail fiber family.

This is Prophage side tail fiber protein homolog StfR (stfR) from Escherichia coli (strain K12).